The sequence spans 83 residues: Lipolysis-activating peptide 1-alpha chain (83 aa).

Positions Met-1–Ser-21 are cleaved as a signal peptide. In terms of domain architecture, LCN-type CS-alpha/beta spans Gly-22–Cys-83. 3 cysteine pairs are disulfide-bonded: Cys-35/Cys-58, Cys-44/Cys-63, and Cys-48/Cys-65.

It belongs to the long (3 C-C) scorpion toxin superfamily. Monomer (edited version) and heterodimer (non-edited version) of this alpha chain and a beta chain (AC P0CI43). Expressed by the venom gland.

The protein localises to the secreted. In terms of biological role, the heterodimer non-edited LVP1 induces lipolysis in rat adipocytes. Induction of lipolysis by LVP1 appears to be mediated through the beta-2 adrenergic receptor pathway (ADRB2). Its function is as follows. The edited BmKBTx-like, similar to beta-toxins, may modulate voltage-gated sodium channels (Nav) and may block voltage-gated potassium channels (Kv). The protein is Lipolysis-activating peptide 1-alpha chain of Lychas mucronatus (Chinese swimming scorpion).